A 206-amino-acid polypeptide reads, in one-letter code: Large ribosomal subunit protein mL62 (206 aa).

A mitochondrion-targeting transit peptide spans 1–29 (MAATRCLRWGLSRAGVWLLPPPARCPRRA). The residue at position 90 (Gln-90) is an N5-methylglutamine.

Belongs to the prokaryotic/mitochondrial release factor family. Mitochondrion-specific ribosomal protein mL62 subfamily. In terms of assembly, component of the mitochondrial large ribosomal subunit (mt-LSU). Mature mammalian 55S mitochondrial ribosomes consist of a small (28S) and a large (39S) subunit. The 28S small subunit contains a 12S ribosomal RNA (12S mt-rRNA) and 30 different proteins. The 39S large subunit contains a 16S rRNA (16S mt-rRNA), a copy of mitochondrial valine transfer RNA (mt-tRNA(Val)), which plays an integral structural role, and 52 different proteins. Post-translationally, methylation of glutamine in the GGQ triplet by HEMK1. In terms of tissue distribution, down-regulated during the in vitro differentiation of HT29-D4 colon carcinoma cells.

It localises to the mitochondrion. It carries out the reaction an N-acyl-L-alpha-aminoacyl-tRNA + H2O = an N-acyl-L-amino acid + a tRNA + H(+). In terms of biological role, essential peptidyl-tRNA hydrolase component of the mitochondrial large ribosomal subunit. Acts as a codon-independent translation release factor that has lost all stop codon specificity and directs the termination of translation in mitochondrion, possibly in case of abortive elongation. Involved in the hydrolysis of peptidyl-tRNAs that have been prematurely terminated and thus in the recycling of stalled mitochondrial ribosomes. The polypeptide is Large ribosomal subunit protein mL62 (Homo sapiens (Human)).